A 22-amino-acid chain; its full sequence is Chlorate reductase subunit gamma (22 aa).

The tract at residues Glu1 to Thr22 is disordered.

In terms of assembly, heterotrimer of alpha, beta and gamma subunits. Heme b is required as a cofactor.

Its subcellular location is the cytoplasm. In terms of biological role, may transfer electrons to the iron-sulfur centers of the beta subunit of chlorate reductase. The protein is Chlorate reductase subunit gamma of Stutzerimonas chloritidismutans (Pseudomonas chloritidismutans).